A 290-amino-acid polypeptide reads, in one-letter code: Elongation factor Ts (290 aa).

Residues 82-85 form an involved in Mg(2+) ion dislocation from EF-Tu region; the sequence is TDFV.

This sequence belongs to the EF-Ts family.

It is found in the cytoplasm. Associates with the EF-Tu.GDP complex and induces the exchange of GDP to GTP. It remains bound to the aminoacyl-tRNA.EF-Tu.GTP complex up to the GTP hydrolysis stage on the ribosome. In Thiobacillus denitrificans (strain ATCC 25259 / T1), this protein is Elongation factor Ts.